The following is a 426-amino-acid chain: 3-phosphoshikimate 1-carboxyvinyltransferase (426 aa).

Positions 22, 23, and 27 each coordinate 3-phosphoshikimate. Lysine 22 serves as a coordination point for phosphoenolpyruvate. Phosphoenolpyruvate contacts are provided by glycine 96 and arginine 124. The 3-phosphoshikimate site is built by serine 170, serine 171, glutamine 172, serine 198, aspartate 314, asparagine 337, and lysine 341. Phosphoenolpyruvate is bound at residue glutamine 172. Catalysis depends on aspartate 314, which acts as the Proton acceptor. The phosphoenolpyruvate site is built by arginine 345, arginine 387, and lysine 412.

This sequence belongs to the EPSP synthase family. Monomer.

It localises to the cytoplasm. The catalysed reaction is 3-phosphoshikimate + phosphoenolpyruvate = 5-O-(1-carboxyvinyl)-3-phosphoshikimate + phosphate. It participates in metabolic intermediate biosynthesis; chorismate biosynthesis; chorismate from D-erythrose 4-phosphate and phosphoenolpyruvate: step 6/7. Functionally, catalyzes the transfer of the enolpyruvyl moiety of phosphoenolpyruvate (PEP) to the 5-hydroxyl of shikimate-3-phosphate (S3P) to produce enolpyruvyl shikimate-3-phosphate and inorganic phosphate. The chain is 3-phosphoshikimate 1-carboxyvinyltransferase from Vibrio cholerae serotype O1 (strain ATCC 39541 / Classical Ogawa 395 / O395).